Consider the following 331-residue polypeptide: MKSLFLLVLGNTEVSLIPGISVAGATPELTKYTPPADAEYLFYDKPKIIDAIPVTPEGHPTPAIITKAARELANFPILVVRGGTYLAPKVPHVHISSIVGRDFRREPALPEAGEIIERAKLLGQELERSGIEELVIGESTPGGTTTAQAILWALGYEGKTSSASPNNPQELKRRVIEEGFRRAGIEFGGLKGNSLEALRQFGDPMMATVVGLSLGFKGDVVLAGGTQMLAVAAILKGLGEDLSRFMIATTRWVVEDKSATFIKTAREIGIISYAADLDFSKSEFKGLRDYEKGYVKEGVGAGGATWLAVKAGFSPEDVVRKVEELYRKLIS.

This sequence belongs to the UPF0284 family.

This chain is UPF0284 protein PF0303, found in Pyrococcus furiosus (strain ATCC 43587 / DSM 3638 / JCM 8422 / Vc1).